We begin with the raw amino-acid sequence, 258 residues long: Ribosomal RNA small subunit methyltransferase J (258 aa).

S-adenosyl-L-methionine is bound by residues 107–108 (RD), 123–124 (ER), 159–160 (SS), and aspartate 177.

The protein belongs to the methyltransferase superfamily. RsmJ family.

It localises to the cytoplasm. It carries out the reaction guanosine(1516) in 16S rRNA + S-adenosyl-L-methionine = N(2)-methylguanosine(1516) in 16S rRNA + S-adenosyl-L-homocysteine + H(+). Specifically methylates the guanosine in position 1516 of 16S rRNA. In Shewanella sediminis (strain HAW-EB3), this protein is Ribosomal RNA small subunit methyltransferase J.